The following is a 386-amino-acid chain: MSVINMSDLDLAGKRVLIRSDLNVPVKDGKVTSDARIRASLPTIEAALKQGARVMVTSHLGRPTEGEYNEEFSLLPVVNYLKEHLKNPVRLAKDYLEGVDVAEGELVVLENVRFNKGEKKDDETLSKKYAALCDVYVMDAFGTAHRAQASTHGVGKFAPVACAGPLLSAELEALGKALKSPARPMVAVVGGSKVSTKFDVLNSLVKIADTVIVGGGIANTFVAIDNNVGKSLYEPDFVDAARKLRDEFKIPVPTDSRVGTEFSETAPATLKKVSEVNDDEEIMDFGDETALAMAKLLKEAKTILWNGPVGVFEFPNFRKGTEIVARAIADSEAFSIAGGGDTLAAIDLFGIEDKISYISTGGGAFLEFVEGKALPAVVMLEERAKQ.

Residues 21–23, Arg36, 59–62, Arg113, and Arg146 each bind substrate; these read DLN and HLGR. ATP contacts are provided by residues Lys197, Glu313, and 339–342; that span reads GGDT.

Belongs to the phosphoglycerate kinase family. Monomer.

It is found in the cytoplasm. It carries out the reaction (2R)-3-phosphoglycerate + ATP = (2R)-3-phospho-glyceroyl phosphate + ADP. The protein operates within carbohydrate degradation; glycolysis; pyruvate from D-glyceraldehyde 3-phosphate: step 2/5. The protein is Phosphoglycerate kinase of Serratia proteamaculans (strain 568).